A 213-amino-acid polypeptide reads, in one-letter code: StAR-related lipid transfer protein 5 (213 aa).

The START domain occupies methionine 1–histidine 213.

Expressed in most tissues, with highest levels in liver and in kidney.

May be involved in the intracellular transport of sterols or other lipids. May bind cholesterol or other sterols. This Mus musculus (Mouse) protein is StAR-related lipid transfer protein 5 (Stard5).